A 731-amino-acid chain; its full sequence is 1,4-alpha-glucan branching enzyme GlgB (731 aa).

The active-site Nucleophile is the D412. E465 (proton donor) is an active-site residue.

Belongs to the glycosyl hydrolase 13 family. GlgB subfamily. In terms of assembly, monomer.

It carries out the reaction Transfers a segment of a (1-&gt;4)-alpha-D-glucan chain to a primary hydroxy group in a similar glucan chain.. Its pathway is glycan biosynthesis; glycogen biosynthesis. Its function is as follows. Catalyzes the formation of the alpha-1,6-glucosidic linkages in glycogen by scission of a 1,4-alpha-linked oligosaccharide from growing alpha-1,4-glucan chains and the subsequent attachment of the oligosaccharide to the alpha-1,6 position. In Bordetella pertussis (strain Tohama I / ATCC BAA-589 / NCTC 13251), this protein is 1,4-alpha-glucan branching enzyme GlgB.